A 201-amino-acid chain; its full sequence is Small ribosomal subunit protein uS4c (201 aa).

One can recognise an S4 RNA-binding domain in the interval 89-152 (MRLDNILFRL…NSRTLVQNLL (64 aa)).

The protein belongs to the universal ribosomal protein uS4 family. In terms of assembly, part of the 30S ribosomal subunit. Contacts protein S5. The interaction surface between S4 and S5 is involved in control of translational fidelity.

It is found in the plastid. It localises to the chloroplast. Functionally, one of the primary rRNA binding proteins, it binds directly to 16S rRNA where it nucleates assembly of the body of the 30S subunit. Its function is as follows. With S5 and S12 plays an important role in translational accuracy. This Olimarabidopsis pumila (Dwarf rocket) protein is Small ribosomal subunit protein uS4c (rps4).